Reading from the N-terminus, the 351-residue chain is D-alanine--D-alanine ligase (351 aa).

One can recognise an ATP-grasp domain in the interval 135-343 (NQIFLQSGQK…MEEVFSDLIE (209 aa)). 167-222 (LETLGFPQFLKPVEGGSSVSVYKITNREQLKEKLALIFESDSKVMSQSFLTGIEVS) provides a ligand contact to ATP. Mg(2+) contacts are provided by aspartate 298, glutamate 310, and asparagine 312.

This sequence belongs to the D-alanine--D-alanine ligase family. Mg(2+) is required as a cofactor. Requires Mn(2+) as cofactor.

It localises to the cytoplasm. It catalyses the reaction 2 D-alanine + ATP = D-alanyl-D-alanine + ADP + phosphate + H(+). The protein operates within cell wall biogenesis; peptidoglycan biosynthesis. Cell wall formation. The sequence is that of D-alanine--D-alanine ligase from Leptospira interrogans serogroup Icterohaemorrhagiae serovar Lai (strain 56601).